The chain runs to 1203 residues: Serine/threonine-protein kinase Nek1 (1203 aa).

The region spanning Tyr-4–Ile-258 is the Protein kinase domain. ATP-binding positions include Ile-10–Ala-18 and Lys-33. Asp-128 functions as the Proton acceptor in the catalytic mechanism. Residue Thr-156 is modified to Phosphothreonine. A Phosphothreonine; by autocatalysis modification is found at Thr-162. Residues Leu-329 to Lys-357 are disordered. 2 positions are modified to phosphoserine: Ser-417 and Ser-437. Residue Thr-615 is modified to Phosphothreonine. Ser-618 is subject to Phosphoserine. Disordered regions lie at residues Leu-643 to Arg-662 and Ala-674 to Asp-708. The segment covering Ala-674 to His-683 has biased composition (basic and acidic residues). Residues Ser-750, Ser-786, Ser-820, and Ser-832 each carry the phosphoserine modification. 2 disordered regions span residues Pro-814–Val-866 and Ala-888–Val-925. A compositionally biased stretch (acidic residues) spans Asn-839–Val-850. Ser-997 carries the phosphoserine modification. 2 disordered regions span residues Ser-1021–Glu-1045 and Arg-1063–Ser-1120. Ser-1071 is subject to Phosphoserine.

Belongs to the protein kinase superfamily. NEK Ser/Thr protein kinase family. NIMA subfamily. As to quaternary structure, binds to CBY2. Found in a complex with CFAP410, NEK1 and SPATA7. Interacts with CFAP410. Interacts (via Ser-997 phosphorylated form) with 14-3-3 proteins. Mg(2+) is required as a cofactor. As to expression, predominantly in testes (germ cells and Sertoli cells). Lower levels in ovary (oocytes and granulosa cells), thymus and lung.

Its subcellular location is the nucleus. The protein localises to the cytoplasm. It is found in the cytoskeleton. The protein resides in the microtubule organizing center. It localises to the centrosome. The enzyme catalyses L-seryl-[protein] + ATP = O-phospho-L-seryl-[protein] + ADP + H(+). The catalysed reaction is L-threonyl-[protein] + ATP = O-phospho-L-threonyl-[protein] + ADP + H(+). Functionally, phosphorylates serines and threonines, but also appears to possess tyrosine kinase activity. Involved in DNA damage checkpoint control and for proper DNA damage repair. In response to injury that includes DNA damage, NEK1 phosphorylates VDAC1 to limit mitochondrial cell death. May be implicated in the control of meiosis. Involved in cilium assembly. In Mus musculus (Mouse), this protein is Serine/threonine-protein kinase Nek1 (Nek1).